A 440-amino-acid polypeptide reads, in one-letter code: 5-methylthioadenosine/S-adenosylhomocysteine deaminase (440 aa).

Zn(2+) is bound by residues H69 and H71. Substrate is bound by residues E98 and H190. H217 contacts Zn(2+). 2 residues coordinate substrate: E220 and D305. D305 is a Zn(2+) binding site.

It belongs to the metallo-dependent hydrolases superfamily. MTA/SAH deaminase family. It depends on Zn(2+) as a cofactor.

The enzyme catalyses S-adenosyl-L-homocysteine + H2O + H(+) = S-inosyl-L-homocysteine + NH4(+). It catalyses the reaction S-methyl-5'-thioadenosine + H2O + H(+) = S-methyl-5'-thioinosine + NH4(+). Its function is as follows. Catalyzes the deamination of 5-methylthioadenosine and S-adenosyl-L-homocysteine into 5-methylthioinosine and S-inosyl-L-homocysteine, respectively. Is also able to deaminate adenosine. The protein is 5-methylthioadenosine/S-adenosylhomocysteine deaminase of Desulfovibrio desulfuricans (strain ATCC 27774 / DSM 6949 / MB).